The sequence spans 688 residues: MARKYPLDKFRNFGIMAHIDAGKTTTTERILFYTGVSHKIGEVHDGEATMDWMVQEQERGITITSAATSCFWKEHELNIIDTPGHVDFTVEVERSLRVLDGAVTVLDAKSGVEPQTETVWRQADKYGVPRMIYVNKMDATGADFFRCIQTVKDRLKANAVPIQIPVGSEQGFKGMVDLIKNVAFIFYDDLGKDMREEAIPAEYADQAEEYRAAMIEAIAETDEELMEKYLEGEELTIEELKAALRKATIANEIYPCICGSSYKNKGVQEMIDGVVDYLPSPLDVPAIKGTTLDGEEDHRNSSDSEPLSALAFKIATDPFVGKLAFTRIYSGVMQSGSYVLNSTKGKKERIGRLVKMHSNSRSEVESLEAGEIGAVIGLKNTTTGDTLCAENSPIILEAMEFPEPVIRVAIEPKTKDAQEKMGMALAKLAEEDPTFKTWTDTETGQTIIAGMGELHLEIIVDRLQREFKVECNVGAPQVAYKETIRSAVKAEAKYAKQSGGKGQYGHAVIEMEPTEGEYVFENAVVGGAIPKEYIPAIDAGIQEASKNGIIAGYNVINFKVKLVHGSYHEVDSSEMAFKIAGSMAFKNAMSKASPVLLEPMMKVEVTVPEEYMGDVIGDINSRRGIMEGMEALNGAQVIRAFVPLSEMFGYATTLRSRTQGRGVYSMVFDHYDEVPKNIQEQIAGSRAK.

In terms of domain architecture, tr-type G spans 8-282 (DKFRNFGIMA…GVVDYLPSPL (275 aa)). GTP-binding positions include 17–24 (AHIDAGKT), 81–85 (DTPGH), and 135–138 (NKMD).

Belongs to the TRAFAC class translation factor GTPase superfamily. Classic translation factor GTPase family. EF-G/EF-2 subfamily.

The protein localises to the cytoplasm. Its function is as follows. Catalyzes the GTP-dependent ribosomal translocation step during translation elongation. During this step, the ribosome changes from the pre-translocational (PRE) to the post-translocational (POST) state as the newly formed A-site-bound peptidyl-tRNA and P-site-bound deacylated tRNA move to the P and E sites, respectively. Catalyzes the coordinated movement of the two tRNA molecules, the mRNA and conformational changes in the ribosome. The polypeptide is Elongation factor G (Clostridium beijerinckii (strain ATCC 51743 / NCIMB 8052) (Clostridium acetobutylicum)).